The chain runs to 209 residues: Na(+)-translocating NADH-quinone reductase subunit D (209 aa).

A run of 5 helical transmembrane segments spans residues 42 to 62, 66 to 86, 103 to 123, 131 to 151, and 178 to 198; these read LVMT…ISLI, IPGS…VIVV, VFVG…AYAM, FMDG…VGFL, and NGLF…IWGL.

This sequence belongs to the NqrDE/RnfAE family. In terms of assembly, composed of six subunits; NqrA, NqrB, NqrC, NqrD, NqrE and NqrF.

It is found in the cell inner membrane. The catalysed reaction is a ubiquinone + n Na(+)(in) + NADH + H(+) = a ubiquinol + n Na(+)(out) + NAD(+). Its function is as follows. NQR complex catalyzes the reduction of ubiquinone-1 to ubiquinol by two successive reactions, coupled with the transport of Na(+) ions from the cytoplasm to the periplasm. NqrA to NqrE are probably involved in the second step, the conversion of ubisemiquinone to ubiquinol. The polypeptide is Na(+)-translocating NADH-quinone reductase subunit D (Proteus mirabilis (strain HI4320)).